The primary structure comprises 633 residues: DNA mismatch repair protein MutL (633 aa).

It belongs to the DNA mismatch repair MutL/HexB family.

In terms of biological role, this protein is involved in the repair of mismatches in DNA. It is required for dam-dependent methyl-directed DNA mismatch repair. May act as a 'molecular matchmaker', a protein that promotes the formation of a stable complex between two or more DNA-binding proteins in an ATP-dependent manner without itself being part of a final effector complex. The protein is DNA mismatch repair protein MutL of Macrococcus caseolyticus (strain JCSC5402) (Macrococcoides caseolyticum).